We begin with the raw amino-acid sequence, 176 residues long: ATP-dependent protease subunit HslV (176 aa).

The active site involves Thr2. Na(+) is bound by residues Ser157, Cys160, and Thr163.

Belongs to the peptidase T1B family. HslV subfamily. As to quaternary structure, a double ring-shaped homohexamer of HslV is capped on each side by a ring-shaped HslU homohexamer. The assembly of the HslU/HslV complex is dependent on binding of ATP.

It is found in the cytoplasm. The catalysed reaction is ATP-dependent cleavage of peptide bonds with broad specificity.. Its activity is regulated as follows. Allosterically activated by HslU binding. Protease subunit of a proteasome-like degradation complex believed to be a general protein degrading machinery. The polypeptide is ATP-dependent protease subunit HslV (Buchnera aphidicola subsp. Baizongia pistaciae (strain Bp)).